A 138-amino-acid polypeptide reads, in one-letter code: ATP synthase epsilon chain (138 aa).

The protein belongs to the ATPase epsilon chain family. In terms of assembly, F-type ATPases have 2 components, CF(1) - the catalytic core - and CF(0) - the membrane proton channel. CF(1) has five subunits: alpha(3), beta(3), gamma(1), delta(1), epsilon(1). CF(0) has three main subunits: a, b and c.

Its subcellular location is the cellular thylakoid membrane. Produces ATP from ADP in the presence of a proton gradient across the membrane. This Synechococcus sp. (strain PCC 6716) protein is ATP synthase epsilon chain (atpC).